Reading from the N-terminus, the 883-residue chain is EEF1AKMT4-ECE2 readthrough transcript protein (883 aa).

The interval 1–160 (MASPGAGRAP…VHTVDQVLSE (160 aa)) is methyltransferase-like region. Topologically, residues 1-178 (MASPGAGRAP…QLLGSRTQLE (178 aa)) are cytoplasmic. S-adenosyl-L-methionine is bound by residues Trp26 and Tyr30. Tyr39 is subject to Phosphotyrosine. Residues Trp41, Gly66, 88–89 (DY), 113–114 (DV), and Lys130 each bind S-adenosyl-L-methionine. Residues 179-199 (LVLAGASLLLAALLLGCLVAL) traverse the membrane as a helical segment. Residues 200 to 883 (GVQYHRDPSH…MNPGQLCEVW (684 aa)) lie on the Lumenal side of the membrane. The 673-residue stretch at 211–883 (TCLTEACIRV…MNPGQLCEVW (673 aa)) folds into the Peptidase M13 domain. Cystine bridges form between Cys212-Cys217, Cys235-Cys868, Cys243-Cys828, Cys299-Cys548, and Cys757-Cys880. 7 N-linked (GlcNAc...) asparagine glycosylation sites follow: Asn279, Asn283, Asn324, Asn384, Asn429, Asn496, and Asn652. Residue His720 participates in Zn(2+) binding. Glu721 is a catalytic residue. Position 724 (His724) interacts with Zn(2+). N-linked (GlcNAc...) asparagine glycans are attached at residues Asn745 and Asn753. Glu780 provides a ligand contact to Zn(2+). Asp784 acts as the Proton donor in catalysis.

The protein in the N-terminal section; belongs to the methyltransferase superfamily. It in the C-terminal section; belongs to the peptidase M13 family. It depends on Zn(2+) as a cofactor.

The protein localises to the golgi apparatus membrane. Its subcellular location is the cytoplasmic vesicle. It is found in the secretory vesicle membrane. It catalyses the reaction Hydrolysis of the 21-Trp-|-Val-22 bond in big endothelin to form endothelin 1.. Inhibited by phosphoramidon. Its function is as follows. Converts big endothelin-1 to endothelin-1. May also have methyltransferase activity. May play a role in amyloid-beta processing. This chain is EEF1AKMT4-ECE2 readthrough transcript protein, found in Homo sapiens (Human).